The sequence spans 408 residues: LL-diaminopimelate aminotransferase (408 aa).

Residues Tyr-15 and Gly-42 each contribute to the substrate site. Pyridoxal 5'-phosphate-binding positions include Tyr-72, 108 to 109 (SK), Tyr-132, Asn-187, Tyr-218, and 246 to 248 (SFS). Substrate is bound by residues Lys-109, Tyr-132, and Asn-187. Lys-249 is subject to N6-(pyridoxal phosphate)lysine. Residues Arg-257 and Asn-292 each coordinate pyridoxal 5'-phosphate. The substrate site is built by Asn-292 and Arg-388.

Belongs to the class-I pyridoxal-phosphate-dependent aminotransferase family. LL-diaminopimelate aminotransferase subfamily. In terms of assembly, homodimer. The cofactor is pyridoxal 5'-phosphate.

It catalyses the reaction (2S,6S)-2,6-diaminopimelate + 2-oxoglutarate = (S)-2,3,4,5-tetrahydrodipicolinate + L-glutamate + H2O + H(+). Its pathway is amino-acid biosynthesis; L-lysine biosynthesis via DAP pathway; LL-2,6-diaminopimelate from (S)-tetrahydrodipicolinate (aminotransferase route): step 1/1. Functionally, involved in the synthesis of meso-diaminopimelate (m-DAP or DL-DAP), required for both lysine and peptidoglycan biosynthesis. Catalyzes the direct conversion of tetrahydrodipicolinate to LL-diaminopimelate. The protein is LL-diaminopimelate aminotransferase of Prochlorococcus marinus (strain MIT 9303).